We begin with the raw amino-acid sequence, 431 residues long: L-ornithine N(5)-monooxygenase (431 aa).

Residues 40–48 (EKLPTFSWH) and glutamine 59 contribute to the FAD site. Lysine 64 serves as a coordination point for substrate. NADP(+) contacts are provided by residues 202-205 (CGQS) and arginine 228. Residues 242 to 245 (NSLY) and asparagine 273 each bind substrate. 273 to 275 (NYS) provides a ligand contact to NADP(+). 399–401 (TLL) contacts FAD. Serine 402 is a binding site for substrate.

This sequence belongs to the lysine N(6)-hydroxylase/L-ornithine N(5)-oxygenase family. It depends on FAD as a cofactor.

The protein localises to the cytoplasm. It is found in the nucleus. The catalysed reaction is L-ornithine + NADPH + O2 = N(5)-hydroxy-L-ornithine + NADP(+) + H2O. It carries out the reaction L-ornithine + NADH + O2 = N(5)-hydroxy-L-ornithine + NAD(+) + H2O. The protein operates within siderophore biosynthesis; ferrichrome biosynthesis. In terms of biological role, catalyzes the conversion of L-ornithine to N(5)-hydroxyornithine, the first step in the biosynthesis of all hydroxamate-containing siderophores, such as ferrichrome. This is L-ornithine N(5)-monooxygenase from Schizosaccharomyces pombe (strain 972 / ATCC 24843) (Fission yeast).